A 353-amino-acid chain; its full sequence is Phospho-N-acetylmuramoyl-pentapeptide-transferase (353 aa).

10 helical membrane-spanning segments follow: residues 24 to 44 (LGFF…ILWA), 66 to 86 (TPTM…VLCA), 88 to 108 (LSNL…FVGF), 129 to 149 (FGML…KGLD), 160 to 180 (PLFE…FLST), 192 to 212 (GLAS…VYVA), 229 to 249 (VGEL…FLWY), 256 to 276 (VFMG…NAIV), 281 to 301 (ILLV…ILQV), and 330 to 350 (KVIV…LLSL).

It belongs to the glycosyltransferase 4 family. MraY subfamily. Requires Mg(2+) as cofactor.

The protein localises to the cell inner membrane. It carries out the reaction UDP-N-acetyl-alpha-D-muramoyl-L-alanyl-gamma-D-glutamyl-meso-2,6-diaminopimeloyl-D-alanyl-D-alanine + di-trans,octa-cis-undecaprenyl phosphate = di-trans,octa-cis-undecaprenyl diphospho-N-acetyl-alpha-D-muramoyl-L-alanyl-D-glutamyl-meso-2,6-diaminopimeloyl-D-alanyl-D-alanine + UMP. It functions in the pathway cell wall biogenesis; peptidoglycan biosynthesis. Catalyzes the initial step of the lipid cycle reactions in the biosynthesis of the cell wall peptidoglycan: transfers peptidoglycan precursor phospho-MurNAc-pentapeptide from UDP-MurNAc-pentapeptide onto the lipid carrier undecaprenyl phosphate, yielding undecaprenyl-pyrophosphoryl-MurNAc-pentapeptide, known as lipid I. The polypeptide is Phospho-N-acetylmuramoyl-pentapeptide-transferase (Helicobacter pylori (strain J99 / ATCC 700824) (Campylobacter pylori J99)).